The following is a 532-amino-acid chain: Eukaryotic translation initiation factor 4B1 (532 aa).

Disordered regions lie at residues 16-365 (EAER…LEEQ), 401-434 (KKLE…IIRG), and 451-532 (RFRQ…REGW). Positions 26 to 35 (AEATAATADT) are enriched in low complexity. 2 stretches are compositionally biased toward gly residues: residues 105–120 (RLGG…SGGR) and 132–147 (WSGG…YGGG). Positions 167-180 (RADEVDDWGKEKKP) are enriched in basic and acidic residues. The Nuclear localization signal 1 motif lies at 177–184 (EKKPLPSF). Positions 193 to 217 (SGDGGGFGGGGSGFGGGGGGGGGGL) are enriched in gly residues. The Nuclear localization signal 2 motif lies at 237–244 (SSTFGSSF). Residues 237–247 (SSTFGSSFGDS) show a composition bias toward low complexity. Basic and acidic residues-rich tracts occupy residues 249–263 (QEER…RKVE) and 286–310 (RPRE…EAKK). Residues 315 to 337 (TSRPTSAHSSRPSSAQSNRSESS) are compositionally biased toward low complexity. Basic and acidic residues-rich tracts occupy residues 355–365 (AKPREVLLEEQ), 401–416 (KKLE…KESD), 472–494 (ERTH…ERPR), and 507–520 (NEQR…KERG).

The protein belongs to the eIF-4 subunit B family. In terms of assembly, homodimer. Nonspherical monomer. mRNA-discriminating component of initiation complexes. Post-translationally, phosphorylated.

It localises to the nucleus. In terms of biological role, promotes the eIF4F and eIF4A RNA-dependent ATP-hydrolysis activity with different efficiency depending on mRNAs, thus providing mRNA discrimination during initiation of translation. The protein is Eukaryotic translation initiation factor 4B1 of Arabidopsis thaliana (Mouse-ear cress).